The following is a 938-amino-acid chain: MPAVSKGDGMRGLAVFISDIRNCKSKEAEIKRINKELANIRSKFKGDKALDGYSKKKYVCKLLFIFLLGHDIDFGHMEAVNLLSSNRYTEKQIGYLFISVLVNSNSELIRLINNAIKNDLASRNPTFMGLALHCIANVGSREMAEAFAGEIPKILVAGDTMDSVKQSAALCLLRLHRASPDLVPVGDWTSRVVHLLNDQHLGVVTAATSLITTLAQKNPEEFKTSVSLAVSRLSRIVTSASTDLQDYTYYFVPAPWLSVKLLRLLQCYPPPEDPAVRGRLTECLEAILNKAQEPPKSKKVQHSNAKNAVLFEAISLVTHHDSEPNLLVRACNQLGQFLQHRETNLRYLALESMCTLASSEFSHEAVKTHIETVINALKTERDVSVRQRAVDLLYAMCDRSNAQQIVAEMLSYLETADYSIREEIVLKVAILAEKYAVDYTWYVDTILNLIRIAGDYVSEEVWYRVIQIVINRDDVQGYAAKTVFEALQAPACHENLVKVGGYILGEFGNLIAGDPRSSPLTQFHLLHSKFHLCSVPTRALLLSTYIKFVNLFPEVKGTIQDVLRSDSQLKNADVELQQRAVEYLRLSTVASTDILATVLEEMPPFPERESSILAKLKKKKGPSTVTDLEEAKRERSADVNGGPEPALASTSAVSTPSPSADLLGLGAAPPVPAGPPPSSGGLLVDVFSDSPSAAAPLAPGSEDNFARFVCKNNGVLFENQLLQIGLKSEFRQNLGRMFIFYGNKTSTQFLNFTPTLICSDDLQANLSLQTKPVDPTVDGGAQVQQAVNIECVSDFTEAPVLNIQFRYGGTFQNVSVKLPITLNKFFQPTEMASQDFFQRWKQLSNPQQEVQSIFKAKHPMDTEVTKAKIIGFGSALLEEVDPNPANFVGAGIIHTRTAQIGCLLRLEPNLQAQMYRLTLRTSRETVSQRLCELLSEQF.

A 1,2-diacyl-sn-glycero-3-phospho-(1D-myo-inositol-3,4,5-trisphosphate)-binding positions include 11–12, K43, Y53, and 57–61; these read RG and KYVCK. Residues 616-677 form a disordered region; sequence LKKKKGPSTV…APPVPAGPPP (62 aa). Over residues 645 to 668 the composition is skewed to low complexity; that stretch reads PALASTSAVSTPSPSADLLGLGAA.

This sequence belongs to the adaptor complexes large subunit family. Adaptor protein complex 2 (AP-2) is a heterotetramer composed of two large adaptins (alpha-type subunit AP2A1 or AP2A2 and beta-type subunit AP2B1), a medium adaptin (mu-type subunit AP2M1) and a small adaptin (sigma-type subunit AP2S1). Binds clathrin. Binds EPN1, EPS15, AMPH, SNAP91 and BIN1. Interacts with HIP1. Interacts with DGKD. Interacts with DENND1A, DENND1B and DENND1C. Interacts with FCHO1. Interacts with ATAT1; this interaction is required for efficient alpha-tubulin acetylation by ATAT1. Interacts with KIAA1107. Together with AP2B1 and AP2M1, it interacts with ADAM10; this interaction facilitates ADAM10 endocytosis from the plasma membrane during long-term potentiation in hippocampal neurons. Interacts with CLN3 (via dileucine motif). Interacts with ABCB11; this interaction regulates cell membrane expression of ABCB11 through its internalization in a clathrin-dependent manner and its subsequent degradation. Interacts with DNAJC6.

It localises to the cell membrane. Its subcellular location is the membrane. The protein resides in the coated pit. Functionally, component of the adaptor protein complex 2 (AP-2). Adaptor protein complexes function in protein transport via transport vesicles in different membrane traffic pathways. Adaptor protein complexes are vesicle coat components and appear to be involved in cargo selection and vesicle formation. AP-2 is involved in clathrin-dependent endocytosis in which cargo proteins are incorporated into vesicles surrounded by clathrin (clathrin-coated vesicles, CCVs) which are destined for fusion with the early endosome. The clathrin lattice serves as a mechanical scaffold but is itself unable to bind directly to membrane components. Clathrin-associated adaptor protein (AP) complexes which can bind directly to both the clathrin lattice and to the lipid and protein components of membranes are considered to be the major clathrin adaptors contributing the CCV formation. AP-2 also serves as a cargo receptor to selectively sort the membrane proteins involved in receptor-mediated endocytosis. AP-2 seems to play a role in the recycling of synaptic vesicle membranes from the presynaptic surface. AP-2 recognizes Y-X-X-[FILMV] (Y-X-X-Phi) and [ED]-X-X-X-L-[LI] endocytosis signal motifs within the cytosolic tails of transmembrane cargo molecules. AP-2 may also play a role in maintaining normal post-endocytic trafficking through the ARF6-regulated, non-clathrin pathway. During long-term potentiation in hippocampal neurons, AP-2 is responsible for the endocytosis of ADAM10. The AP-2 alpha subunit binds polyphosphoinositide-containing lipids, positioning AP-2 on the membrane. The AP-2 alpha subunit acts via its C-terminal appendage domain as a scaffolding platform for endocytic accessory proteins. The AP-2 alpha and AP-2 sigma subunits are thought to contribute to the recognition of the [ED]-X-X-X-L-[LI] motif. This chain is AP-2 complex subunit alpha-2, found in Bos taurus (Bovine).